The primary structure comprises 130 residues: Small ribosomal subunit protein uS8 (130 aa).

It belongs to the universal ribosomal protein uS8 family. Part of the 30S ribosomal subunit. Contacts proteins S5 and S12.

Its function is as follows. One of the primary rRNA binding proteins, it binds directly to 16S rRNA central domain where it helps coordinate assembly of the platform of the 30S subunit. The polypeptide is Small ribosomal subunit protein uS8 (Shewanella loihica (strain ATCC BAA-1088 / PV-4)).